Consider the following 495-residue polypeptide: Lysine--tRNA ligase (495 aa).

The Mg(2+) site is built by E406 and E413.

The protein belongs to the class-II aminoacyl-tRNA synthetase family. Homodimer. Mg(2+) is required as a cofactor.

It is found in the cytoplasm. The enzyme catalyses tRNA(Lys) + L-lysine + ATP = L-lysyl-tRNA(Lys) + AMP + diphosphate. In Leptospira interrogans serogroup Icterohaemorrhagiae serovar copenhageni (strain Fiocruz L1-130), this protein is Lysine--tRNA ligase.